The following is a 69-amino-acid chain: Conopeptide Y-Pl1 (69 aa).

Residues 1–20 form the signal peptide; sequence MSKLGVVLFVFLLLLPLAAP. Positions 21–69 are excised as a propeptide; it reads QPVGDQPADQPADRNAEARARFLHPFQYYTLYRYLTRFLHRYPIYYIRY.

The protein belongs to the conotoxin M superfamily. Conopeptide Y family. Expressed by the venom duct.

It localises to the secreted. Tyrosine-rich conopeptide that targets several channels/receptors that are expressed in Xenopus oocytes. These targets are the voltage-gated potassium channels Kv1.6/KCNA6 (IC(50) is 170 nM) and Kv1.2/KCNA2 (IC(50) is 2.0 uM), Nav1.2/SCN2A (30% of inhibition), and N-methyl-D-aspartate (NMDA) receptor (GRIN1/GRIN2A/GRIN3B and GRIN1/GRIN2B/GRIN3B) (15% of inhibition). In vivo, causes the marine worm N.virens to move very slowly in contrast to control worms, and causes seizures (at 5 nmol) and death (20 nmol) to mice when intracranially injected. The sequence is that of Conopeptide Y-Pl1 from Conus planorbis (Planorbis cone).